Reading from the N-terminus, the 223-residue chain is MKRN2 opposite strand protein (223 aa).

The chain is MKRN2 opposite strand protein (MKRN2OS) from Homo sapiens (Human).